The sequence spans 677 residues: DNA polymerase epsilon subunit B (677 aa).

Belongs to the DNA polymerase epsilon subunit B family. Heterotetramer. Consists of four subunits: POL2, DPB2, DPB3 and DPB4.

Its subcellular location is the nucleus. In terms of biological role, as accessory component of the DNA polymerase epsilon (DNA polymerase II) participates in chromosomal DNA replication. This is DNA polymerase epsilon subunit B (DPB2) from Eremothecium gossypii (strain ATCC 10895 / CBS 109.51 / FGSC 9923 / NRRL Y-1056) (Yeast).